Here is a 296-residue protein sequence, read N- to C-terminus: Transcription factor bHLH99 (296 aa).

The 52-residue stretch at 99 to 150 (NQRMNHIAVERNRRKQMNHFLSILKSMMPLSYSQPNDQASIIEGTISYLKKL) folds into the bHLH domain.

Homodimer. In terms of tissue distribution, expressed constitutively in roots, stems, and flowers.

Its subcellular location is the nucleus. This is Transcription factor bHLH99 (BHLH99) from Arabidopsis thaliana (Mouse-ear cress).